The following is a 144-amino-acid chain: Ninjurin-2 (144 aa).

At 1 to 62 (MESDREIIHL…KSVLEQGPFS (62 aa)) the chain is on the extracellular side. The segment at 27–39 (NHYATKKSVAESM) is helix alpha1. A helix alpha2 region spans residues 40–59 (LDVALFMSNAMRLKSVLEQG). A helical transmembrane segment spans residues 63-94 (QYYTTLLTLISASLLLQVVIGILLVVIARLNL). The Cytoplasmic portion of the chain corresponds to 95–98 (NEVE). The chain crosses the membrane as a helical span at residues 99–128 (NQWRLNQLNNAATTLVFITVVINIFITAFG). Gln-105 contributes to the cholesterol binding site. Over 129–144 (AHKTGSVAARTSSNPI) the chain is Extracellular.

Belongs to the ninjurin family. As to quaternary structure, homooligomer; in response to stimuli, homooligomerizes into filaments. In contrast to NINJ1, the filament is curved toward the intracellular space, preventing its circularization on a relatively flat membrane to mediate plasma membrane rupture: curvature is caused by cholesterol-binding at the cytoplasmic leaflet.

Its subcellular location is the cell membrane. In terms of biological role, its role in unclear. In contrast to NINJ1 paralog, does not mediate plasma membrane rupture (cytolysis) downstream of necroptotic and pyroptotic programmed cell death. While it is able to oligomerize and form filaments, filaments are curved toward the intracellular space, preventing circularization to mediate plasma membrane rupture. May act as a homophilic transmembrane adhesion molecule involved in nerve regeneration. Promotes axonal growth. The sequence is that of Ninjurin-2 (Ninj2) from Rattus norvegicus (Rat).